A 396-amino-acid chain; its full sequence is L-lactate dehydrogenase (396 aa).

Residues 1-380 form the FMN hydroxy acid dehydrogenase domain; the sequence is MIISAASDYR…TQDSLVQGLG (380 aa). A substrate-binding site is contributed by tyrosine 24. FMN-binding residues include serine 106 and glutamine 127. Tyrosine 129 is a binding site for substrate. Residue threonine 155 coordinates FMN. Arginine 164 is a binding site for substrate. Lysine 251 is an FMN binding site. Histidine 275 functions as the Proton acceptor in the catalytic mechanism. Residue arginine 278 coordinates substrate. 306 to 330 contacts FMN; it reads DSGIRNGLDVVRMIALGADTILLGR.

It belongs to the FMN-dependent alpha-hydroxy acid dehydrogenase family. Requires FMN as cofactor.

The protein localises to the cell inner membrane. It catalyses the reaction (S)-lactate + A = pyruvate + AH2. Its function is as follows. Catalyzes the conversion of L-lactate to pyruvate. Is coupled to the respiratory chain. This chain is L-lactate dehydrogenase, found in Escherichia coli O81 (strain ED1a).